Reading from the N-terminus, the 1295-residue chain is Phosphoribosylformylglycinamidine synthase (1295 aa).

Residues 305–327 (WPGAATGSGGEIRDEGATGRGAK) form a disordered region. ATP contacts are provided by residues 307–318 (GAATGSGGEIRD), 386–388 (TGY), and A678. Residues D679, E718, N722, and D884 each coordinate Mg(2+). S886 lines the ATP pocket. The Glutamine amidotransferase type-1 domain maps to 1041 to 1295 (KVAVLREQGG…IFRNARKQLG (255 aa)). The Nucleophile role is filled by C1135. Active-site residues include H1260 and E1262.

The protein in the N-terminal section; belongs to the FGAMS family. In terms of assembly, monomer.

The protein resides in the cytoplasm. The catalysed reaction is N(2)-formyl-N(1)-(5-phospho-beta-D-ribosyl)glycinamide + L-glutamine + ATP + H2O = 2-formamido-N(1)-(5-O-phospho-beta-D-ribosyl)acetamidine + L-glutamate + ADP + phosphate + H(+). It participates in purine metabolism; IMP biosynthesis via de novo pathway; 5-amino-1-(5-phospho-D-ribosyl)imidazole from N(2)-formyl-N(1)-(5-phospho-D-ribosyl)glycinamide: step 1/2. Phosphoribosylformylglycinamidine synthase involved in the purines biosynthetic pathway. Catalyzes the ATP-dependent conversion of formylglycinamide ribonucleotide (FGAR) and glutamine to yield formylglycinamidine ribonucleotide (FGAM) and glutamate. This Salmonella choleraesuis (strain SC-B67) protein is Phosphoribosylformylglycinamidine synthase.